The following is a 146-amino-acid chain: FAD synthase (146 aa).

ATP contacts are provided by residues 9–10 (TF), 14–17 (HPGH), and Asp92.

This sequence belongs to the archaeal FAD synthase family. As to quaternary structure, homodimer. It depends on a divalent metal cation as a cofactor.

The enzyme catalyses FMN + ATP + H(+) = FAD + diphosphate. It functions in the pathway cofactor biosynthesis; FAD biosynthesis; FAD from FMN: step 1/1. Functionally, catalyzes the transfer of the AMP portion of ATP to flavin mononucleotide (FMN) to produce flavin adenine dinucleotide (FAD) coenzyme. The sequence is that of FAD synthase from Halobacterium salinarum (strain ATCC 29341 / DSM 671 / R1).